Consider the following 223-residue polypeptide: Phosphoribosylformylglycinamidine synthase subunit PurQ (223 aa).

The Glutamine amidotransferase type-1 domain maps to 3–223 (FAVLVFPGSN…MVKSWREQHV (221 aa)). Cys-85 acts as the Nucleophile in catalysis. Residues His-193 and Glu-195 contribute to the active site.

As to quaternary structure, part of the FGAM synthase complex composed of 1 PurL, 1 PurQ and 2 PurS subunits.

It is found in the cytoplasm. It catalyses the reaction N(2)-formyl-N(1)-(5-phospho-beta-D-ribosyl)glycinamide + L-glutamine + ATP + H2O = 2-formamido-N(1)-(5-O-phospho-beta-D-ribosyl)acetamidine + L-glutamate + ADP + phosphate + H(+). The enzyme catalyses L-glutamine + H2O = L-glutamate + NH4(+). It functions in the pathway purine metabolism; IMP biosynthesis via de novo pathway; 5-amino-1-(5-phospho-D-ribosyl)imidazole from N(2)-formyl-N(1)-(5-phospho-D-ribosyl)glycinamide: step 1/2. Part of the phosphoribosylformylglycinamidine synthase complex involved in the purines biosynthetic pathway. Catalyzes the ATP-dependent conversion of formylglycinamide ribonucleotide (FGAR) and glutamine to yield formylglycinamidine ribonucleotide (FGAM) and glutamate. The FGAM synthase complex is composed of three subunits. PurQ produces an ammonia molecule by converting glutamine to glutamate. PurL transfers the ammonia molecule to FGAR to form FGAM in an ATP-dependent manner. PurS interacts with PurQ and PurL and is thought to assist in the transfer of the ammonia molecule from PurQ to PurL. This is Phosphoribosylformylglycinamidine synthase subunit PurQ from Staphylococcus aureus (strain Mu50 / ATCC 700699).